The primary structure comprises 103 residues: L-rhamnose-binding lectin ELEL-1 (103 aa).

In terms of domain architecture, SUEL-type lectin spans 13-102 (VCEGSSLTIS…KYLELSYDCS (90 aa)). Cystine bridges form between Cys-14/Cys-45, Cys-23/Cys-101, Cys-56/Cys-88, and Cys-69/Cys-75.

In terms of assembly, homodimer; disulfide-linked. Not glycosylated.

In terms of biological role, rhamnose-binding lectin. Also binds alpha-D-melibiose, alpha-D-lactose, beta-D-lactose, methyl-alpha-D-galactopyranoside, methyl-beta-D--galactopyranoside and D-galactose but not D-arabinose, L-fucose, D-glucose, D-mannose, D-maltose, D-sucrose, N-acetyl-D-galactosamine, N-acetyl-D-glucosamine, N-acetyl-D-mannosamine-D-xylose or by glycoproteins orosomucoid, thyroglobulin, ovomucoid and porcine stomach mucin. Shows cation-independent hemagglutinating activity against rabbit and human erythrocytes. Agglutinates cells of Gram-positive bacterial species S.aureus but not those of Gram-negative E.coli. This Echinometra lucunter (Rock-boring urchin) protein is L-rhamnose-binding lectin ELEL-1.